The sequence spans 86 residues: Omega-theraphotoxin-Hhn1f 4 (86 aa).

Positions 1 to 21 (MKSIVFVALFGLALLAVVCSA) are cleaved as a signal peptide. The propeptide occupies 22-50 (SEDAHKELLKEVVRAMVVDKTDAVQAGER). 3 disulfide bridges follow: cysteine 52–cysteine 66, cysteine 59–cysteine 71, and cysteine 65–cysteine 78.

The protein belongs to the neurotoxin 10 (Hwtx-1) family. 17 (Hntx-9) subfamily. Expressed by the venom gland.

It is found in the secreted. Its function is as follows. Ion channel inhibitor. This chain is Omega-theraphotoxin-Hhn1f 4, found in Cyriopagopus hainanus (Chinese bird spider).